Consider the following 182-residue polypeptide: Protein GrpE (182 aa).

Positions 1 to 17 (MEEKKRCEESEKIKEQE) are enriched in basic and acidic residues. A disordered region spans residues 1–33 (MEEKKRCEESEKIKEQENETLPNEDSPSMGKKV).

This sequence belongs to the GrpE family. In terms of assembly, homodimer.

It is found in the cytoplasm. Participates actively in the response to hyperosmotic and heat shock by preventing the aggregation of stress-denatured proteins, in association with DnaK and GrpE. It is the nucleotide exchange factor for DnaK and may function as a thermosensor. Unfolded proteins bind initially to DnaJ; upon interaction with the DnaJ-bound protein, DnaK hydrolyzes its bound ATP, resulting in the formation of a stable complex. GrpE releases ADP from DnaK; ATP binding to DnaK triggers the release of the substrate protein, thus completing the reaction cycle. Several rounds of ATP-dependent interactions between DnaJ, DnaK and GrpE are required for fully efficient folding. This is Protein GrpE from Borrelia hermsii (strain HS1 / DAH).